A 242-amino-acid chain; its full sequence is Transcriptional regulatory protein btr (242 aa).

Residues Met-158 to Pro-231 enclose the HTH crp-type domain. The segment at residues Arg-191–Ser-210 is a DNA-binding region (H-T-H motif).

In terms of biological role, may regulate gene expression in response to changes in oxygen levels or to changes in the redox potential of the bacterial environment. This chain is Transcriptional regulatory protein btr (btr), found in Bordetella pertussis (strain Tohama I / ATCC BAA-589 / NCTC 13251).